Consider the following 345-residue polypeptide: Dihydroorotate dehydrogenase (quinone) (345 aa).

FMN is bound by residues 65–69 and Thr-89; that span reads AGLDK. Lys-69 contacts substrate. Position 114 to 118 (114 to 118) interacts with substrate; sequence NRMGF. FMN is bound by residues Asn-142 and Asn-175. Substrate is bound at residue Asn-175. Residue Ser-178 is the Nucleophile of the active site. Asn-180 is a substrate binding site. Residues Lys-220 and Thr-248 each contribute to the FMN site. Residue 249 to 250 participates in substrate binding; sequence NT. FMN is bound by residues Gly-271, Gly-300, and 321-322; that span reads YT.

The protein belongs to the dihydroorotate dehydrogenase family. Type 2 subfamily. In terms of assembly, monomer. FMN serves as cofactor.

It is found in the cell membrane. The catalysed reaction is (S)-dihydroorotate + a quinone = orotate + a quinol. The protein operates within pyrimidine metabolism; UMP biosynthesis via de novo pathway; orotate from (S)-dihydroorotate (quinone route): step 1/1. Catalyzes the conversion of dihydroorotate to orotate with quinone as electron acceptor. This Burkholderia cenocepacia (strain ATCC BAA-245 / DSM 16553 / LMG 16656 / NCTC 13227 / J2315 / CF5610) (Burkholderia cepacia (strain J2315)) protein is Dihydroorotate dehydrogenase (quinone).